The primary structure comprises 152 residues: Large ribosomal subunit protein uL15 (152 aa).

Residues 1–12 (MTSTLNTLKSNT) show a composition bias toward polar residues. Residues 1-57 (MTSTLNTLKSNTGSRKKKLRKGRGIAAGQGASCGFGMRGQKSRSGRPTRPGFEGGQM) form a disordered region. Positions 14-23 (SRKKKLRKGR) are enriched in basic residues. Residues 25-37 (IAAGQGASCGFGM) show a composition bias toward gly residues.

The protein belongs to the universal ribosomal protein uL15 family. Part of the 50S ribosomal subunit.

Its function is as follows. Binds to the 23S rRNA. The chain is Large ribosomal subunit protein uL15 from Prochlorococcus marinus subsp. pastoris (strain CCMP1986 / NIES-2087 / MED4).